Consider the following 170-residue polypeptide: Cyclic pyranopterin monophosphate synthase (170 aa).

Residues 75 to 77 and 115 to 116 contribute to the substrate site; these read MCH and ME. Aspartate 130 is an active-site residue.

Belongs to the MoaC family. As to quaternary structure, homohexamer; trimer of dimers.

The catalysed reaction is (8S)-3',8-cyclo-7,8-dihydroguanosine 5'-triphosphate = cyclic pyranopterin phosphate + diphosphate. It functions in the pathway cofactor biosynthesis; molybdopterin biosynthesis. Functionally, catalyzes the conversion of (8S)-3',8-cyclo-7,8-dihydroguanosine 5'-triphosphate to cyclic pyranopterin monophosphate (cPMP). This chain is Cyclic pyranopterin monophosphate synthase, found in Bacillus subtilis (strain 168).